Here is a 238-residue protein sequence, read N- to C-terminus: Ribonuclease PH (238 aa).

The tract at residues 67-87 is disordered; sequence PRSTHTRSDREAARGKQSGRT. Phosphate is bound by residues R86 and 124 to 126; that span reads GTR.

It belongs to the RNase PH family. In terms of assembly, homohexameric ring arranged as a trimer of dimers.

The catalysed reaction is tRNA(n+1) + phosphate = tRNA(n) + a ribonucleoside 5'-diphosphate. Functionally, phosphorolytic 3'-5' exoribonuclease that plays an important role in tRNA 3'-end maturation. Removes nucleotide residues following the 3'-CCA terminus of tRNAs; can also add nucleotides to the ends of RNA molecules by using nucleoside diphosphates as substrates, but this may not be physiologically important. Probably plays a role in initiation of 16S rRNA degradation (leading to ribosome degradation) during starvation. The polypeptide is Ribonuclease PH (Ralstonia nicotianae (strain ATCC BAA-1114 / GMI1000) (Ralstonia solanacearum)).